The chain runs to 501 residues: ATP synthase subunit alpha (501 aa).

169-176 (GDRQTGKT) lines the ATP pocket.

This sequence belongs to the ATPase alpha/beta chains family. As to quaternary structure, F-type ATPases have 2 components, CF(1) - the catalytic core - and CF(0) - the membrane proton channel. CF(1) has five subunits: alpha(3), beta(3), gamma(1), delta(1), epsilon(1). CF(0) has three main subunits: a(1), b(2) and c(9-12). The alpha and beta chains form an alternating ring which encloses part of the gamma chain. CF(1) is attached to CF(0) by a central stalk formed by the gamma and epsilon chains, while a peripheral stalk is formed by the delta and b chains.

The protein resides in the cell membrane. The catalysed reaction is ATP + H2O + 4 H(+)(in) = ADP + phosphate + 5 H(+)(out). Functionally, produces ATP from ADP in the presence of a proton gradient across the membrane. The alpha chain is a regulatory subunit. In Streptococcus agalactiae serotype III (strain NEM316), this protein is ATP synthase subunit alpha.